A 444-amino-acid chain; its full sequence is UDP-N-acetylmuramate--L-alanine ligase (444 aa).

110–116 (GAHGKTS) is a binding site for ATP.

It belongs to the MurCDEF family.

The protein localises to the cytoplasm. It carries out the reaction UDP-N-acetyl-alpha-D-muramate + L-alanine + ATP = UDP-N-acetyl-alpha-D-muramoyl-L-alanine + ADP + phosphate + H(+). It functions in the pathway cell wall biogenesis; peptidoglycan biosynthesis. In terms of biological role, cell wall formation. The polypeptide is UDP-N-acetylmuramate--L-alanine ligase (Streptococcus pneumoniae (strain ATCC 700669 / Spain 23F-1)).